The chain runs to 677 residues: Membrane-associated tyrosine- and threonine-specific cdc2-inhibitory kinase wee-1.3 (677 aa).

The segment covering 1–22 has biased composition (polar residues); it reads MDDTEGNSSMDSIRNGQSSPLP. Positions 1–30 are disordered; it reads MDDTEGNSSMDSIRNGQSSPLPQVTPRLPQ. The Protein kinase domain maps to 108–355; sequence FQIDEIIGRG…SRDLLDHPVI (248 aa). ATP is bound by residues 114–122 and Lys-137; that span reads IGRGSFGEV. The active-site Proton acceptor is Asp-228. 2 residues coordinate Mg(2+): Asn-233 and Asp-246. 2 disordered regions span residues 478-526 and 632-677; these read FDND…GTPR and EPSN…GDEV. The span at 489 to 499 shows a compositional bias: polar residues; it reads ATCSSSNSSAI. Basic and acidic residues predominate over residues 638-652; the sequence is TVDHHTILEQSESPR.

Belongs to the protein kinase superfamily. Ser/Thr protein kinase family. WEE1 subfamily.

Its subcellular location is the golgi apparatus membrane. The protein resides in the cytoplasm. It catalyses the reaction L-seryl-[protein] + ATP = O-phospho-L-seryl-[protein] + ADP + H(+). The enzyme catalyses L-threonyl-[protein] + ATP = O-phospho-L-threonyl-[protein] + ADP + H(+). In terms of biological role, acts as a negative regulator of entry into mitosis (G2 to M transition) by phosphorylation of the CDK1 kinase during oocyte maturation. Required for oocyte maturation, embryonic development, germline proliferation and initiation of meiosis during spermatogenesis. Required for chromosome structure during mitosis and negative regulation of nuclear envelope breakdown. The polypeptide is Membrane-associated tyrosine- and threonine-specific cdc2-inhibitory kinase wee-1.3 (wee-1.3) (Caenorhabditis elegans).